The primary structure comprises 395 residues: ATP phosphoribosyltransferase regulatory subunit (395 aa).

The protein belongs to the class-II aminoacyl-tRNA synthetase family. HisZ subfamily. As to quaternary structure, heteromultimer composed of HisG and HisZ subunits.

The protein localises to the cytoplasm. It participates in amino-acid biosynthesis; L-histidine biosynthesis; L-histidine from 5-phospho-alpha-D-ribose 1-diphosphate: step 1/9. Required for the first step of histidine biosynthesis. May allow the feedback regulation of ATP phosphoribosyltransferase activity by histidine. This is ATP phosphoribosyltransferase regulatory subunit from Thioalkalivibrio sulfidiphilus (strain HL-EbGR7).